The primary structure comprises 240 residues: 2,3,4,5-tetrahydropyridine-2,6-dicarboxylate N-acetyltransferase (240 aa).

It belongs to the transferase hexapeptide repeat family. DapH subfamily.

The catalysed reaction is (S)-2,3,4,5-tetrahydrodipicolinate + acetyl-CoA + H2O = L-2-acetamido-6-oxoheptanedioate + CoA. The protein operates within amino-acid biosynthesis; L-lysine biosynthesis via DAP pathway; LL-2,6-diaminopimelate from (S)-tetrahydrodipicolinate (acetylase route): step 1/3. Catalyzes the transfer of an acetyl group from acetyl-CoA to tetrahydrodipicolinate. The chain is 2,3,4,5-tetrahydropyridine-2,6-dicarboxylate N-acetyltransferase from Bacillus thuringiensis (strain Al Hakam).